The chain runs to 349 residues: CCN family member 2 (349 aa).

An N-terminal signal peptide occupies residues 1–26 (MTAASMGPVRVAFVVLLALCSRPAVG). An IGFBP N-terminal domain is found at 27-98 (QNCSGPCRCP…NRKIGVCTAK (72 aa)). N-linked (GlcNAc...) asparagine glycosylation is present at Asn-28. Intrachain disulfides connect Cys-29–Cys-54, Cys-33–Cys-56, Cys-35–Cys-57, Cys-43–Cys-60, Cys-68–Cys-82, and Cys-74–Cys-95. A VWFC domain is found at 101-167 (APCIFGGTVY…GKCCEEWVCD (67 aa)). The region spanning 198-243 (NCLVQTTEWSACSKTCGMGISTRVTNDNASCRLEKQSRLCMVRPCE) is the TSP type-1 domain. N-linked (GlcNAc...) asparagine glycosylation is present at Asn-225. Residues 247–349 (EENIKKGKKC…YYRKMYGDMA (103 aa)) form a heparin-binding region. 5 cysteine pairs are disulfide-bonded: Cys-256–Cys-293, Cys-273–Cys-307, Cys-284–Cys-323, Cys-287–Cys-325, and Cys-292–Cys-329. The region spanning 256–330 (CIRTPKISKP…KTCACHYNCP (75 aa)) is the CTCK domain.

The protein belongs to the CCN family. Monomer. Interacts with TSKU. In terms of tissue distribution, expressed in bone marrow and thymic cells. Also expressed one of two Wilms tumors tested.

Its subcellular location is the secreted. The protein localises to the extracellular space. The protein resides in the extracellular matrix. Functionally, major connective tissue mitoattractant secreted by vascular endothelial cells. Promotes proliferation and differentiation of chondrocytes. Is involved in the stimulation of osteoblast differentiation and has a critical role in osteogenesis. Mediates heparin- and divalent cation-dependent cell adhesion in many cell types including fibroblasts, myofibroblasts, endothelial and epithelial cells. Enhances fibroblast growth factor-induced DNA synthesis. The sequence is that of CCN family member 2 from Homo sapiens (Human).